The sequence spans 267 residues: Hydroxyethylthiazole kinase 2 (267 aa).

Substrate is bound at residue Met41. Residues Lys116 and Thr166 each contribute to the ATP site. Position 193 (Gly193) interacts with substrate.

This sequence belongs to the Thz kinase family. Mg(2+) is required as a cofactor.

The catalysed reaction is 5-(2-hydroxyethyl)-4-methylthiazole + ATP = 4-methyl-5-(2-phosphooxyethyl)-thiazole + ADP + H(+). It functions in the pathway cofactor biosynthesis; thiamine diphosphate biosynthesis; 4-methyl-5-(2-phosphoethyl)-thiazole from 5-(2-hydroxyethyl)-4-methylthiazole: step 1/1. In terms of biological role, catalyzes the phosphorylation of the hydroxyl group of 4-methyl-5-beta-hydroxyethylthiazole (THZ). The polypeptide is Hydroxyethylthiazole kinase 2 (Streptococcus pneumoniae (strain JJA)).